The primary structure comprises 796 residues: RNA cytosine-C(5)-methyltransferase NSUN2 (796 aa).

Residues 1-11 show a composition bias toward basic residues; the sequence is MGRRARDRRRQ. The tract at residues 1-36 is disordered; it reads MGRRARDRRRQLQPQQRRERSGGGGGGGDDQAGWAG. A compositionally biased stretch (gly residues) spans 22-36; it reads GGGGGGGDDQAGWAG. Residues 184–190, D215, D242, and D268 each bind S-adenosyl-L-methionine; that span reads CAAPGSK. C321 functions as the Nucleophile in the catalytic mechanism. Disordered regions lie at residues 435 to 501 and 707 to 796; these read WNKR…CGPP and RKEG…NVKD. Composition is skewed to basic and acidic residues over residues 467–483, 708–721, and 733–746; these read ATEK…KKVQ, KEGE…EEVQ, and VEDK…KMEA. Polar residues predominate over residues 774–783; sequence CSKNTNSHIN. The span at 784 to 796 shows a compositional bias: basic and acidic residues; the sequence is QESKDMNTNNVKD.

Belongs to the class I-like SAM-binding methyltransferase superfamily. RsmB/NOP family. TRM4 subfamily.

The protein localises to the nucleus. Its subcellular location is the nucleolus. It is found in the cytoplasm. The protein resides in the mitochondrion. It localises to the cytoskeleton. The protein localises to the spindle. Its subcellular location is the secreted. It is found in the extracellular exosome. The enzyme catalyses cytidine(48) in tRNA + S-adenosyl-L-methionine = 5-methylcytidine(48) in tRNA + S-adenosyl-L-homocysteine + H(+). It carries out the reaction cytidine(49) in tRNA + S-adenosyl-L-methionine = 5-methylcytidine(49) in tRNA + S-adenosyl-L-homocysteine + H(+). The catalysed reaction is cytidine(50) in tRNA + S-adenosyl-L-methionine = 5-methylcytidine(50) in tRNA + S-adenosyl-L-homocysteine + H(+). It catalyses the reaction cytidine(34) in tRNA precursor + S-adenosyl-L-methionine = 5-methylcytidine(34) in tRNA precursor + S-adenosyl-L-homocysteine + H(+). The enzyme catalyses a cytidine in mRNA + S-adenosyl-L-methionine = a 5-methylcytidine in mRNA + S-adenosyl-L-homocysteine + H(+). RNA cytosine C(5)-methyltransferase that methylates cytosine to 5-methylcytosine (m5C) in various RNAs, such as tRNAs, mRNAs and some long non-coding RNAs (lncRNAs). Involved in various processes, such as epidermal stem cell differentiation, testis differentiation and maternal to zygotic transition during early development: acts by increasing protein synthesis; cytosine C(5)-methylation promoting tRNA stability and preventing mRNA decay. Methylates cytosine to 5-methylcytosine (m5C) at positions 34 and 48 of intron-containing tRNA(Leu)(CAA) precursors, and at positions 48, 49 and 50 of tRNA(Gly)(GCC) precursors. tRNA methylation is required generation of RNA fragments derived from tRNAs (tRFs). Also mediates C(5)-methylation of mitochondrial tRNAs. Catalyzes cytosine C(5)-methylation of mRNAs, leading to stabilize them and prevent mRNA decay. Cytosine C(5)-methylation of mRNAs also regulates mRNA export. Also mediates cytosine C(5)-methylation of non-coding RNAs, such as vault RNAs (vtRNAs), promoting their processing into regulatory small RNAs. Required for proper spindle assembly and chromosome segregation, independently of its methyltransferase activity. This is RNA cytosine-C(5)-methyltransferase NSUN2 from Gallus gallus (Chicken).